The primary structure comprises 426 residues: Enolase (426 aa).

Glutamine 163 serves as a coordination point for (2R)-2-phosphoglycerate. Glutamate 205 functions as the Proton donor in the catalytic mechanism. Residues aspartate 242, glutamate 285, and aspartate 312 each coordinate Mg(2+). The (2R)-2-phosphoglycerate site is built by lysine 337, arginine 366, serine 367, and lysine 388. Lysine 337 acts as the Proton acceptor in catalysis.

Belongs to the enolase family. Requires Mg(2+) as cofactor.

The protein resides in the cytoplasm. The protein localises to the secreted. Its subcellular location is the cell surface. It catalyses the reaction (2R)-2-phosphoglycerate = phosphoenolpyruvate + H2O. It participates in carbohydrate degradation; glycolysis; pyruvate from D-glyceraldehyde 3-phosphate: step 4/5. Catalyzes the reversible conversion of 2-phosphoglycerate (2-PG) into phosphoenolpyruvate (PEP). It is essential for the degradation of carbohydrates via glycolysis. This chain is Enolase, found in Gluconobacter oxydans (strain 621H) (Gluconobacter suboxydans).